We begin with the raw amino-acid sequence, 201 residues long: 3-isopropylmalate dehydratase small subunit (201 aa).

It belongs to the LeuD family. LeuD type 1 subfamily. In terms of assembly, heterodimer of LeuC and LeuD.

It catalyses the reaction (2R,3S)-3-isopropylmalate = (2S)-2-isopropylmalate. The protein operates within amino-acid biosynthesis; L-leucine biosynthesis; L-leucine from 3-methyl-2-oxobutanoate: step 2/4. In terms of biological role, catalyzes the isomerization between 2-isopropylmalate and 3-isopropylmalate, via the formation of 2-isopropylmaleate. The sequence is that of 3-isopropylmalate dehydratase small subunit from Shewanella halifaxensis (strain HAW-EB4).